Here is a 156-residue protein sequence, read N- to C-terminus: RING finger protein 224 (156 aa).

An RING-type zinc finger spans residues 23–70 (CIICYSAYDLSVHLPRRLYCGHTFCQACMQRLDMPAHEQHWIPCPQCR).

The chain is RING finger protein 224 (Rnf224) from Mus musculus (Mouse).